A 20-amino-acid polypeptide reads, in one-letter code: Alkaline phosphatase (20 aa).

Expressed by the venom gland.

It localises to the secreted. It catalyses the reaction a phosphate monoester + H2O = an alcohol + phosphate. In terms of biological role, has hemorrhagic activity. This chain is Alkaline phosphatase, found in Deinagkistrodon acutus (Hundred-pace snake).